The following is a 476-amino-acid chain: Proline--tRNA ligase (476 aa).

This sequence belongs to the class-II aminoacyl-tRNA synthetase family. ProS type 3 subfamily. In terms of assembly, homodimer.

Its subcellular location is the cytoplasm. The enzyme catalyses tRNA(Pro) + L-proline + ATP = L-prolyl-tRNA(Pro) + AMP + diphosphate. In terms of biological role, catalyzes the attachment of proline to tRNA(Pro) in a two-step reaction: proline is first activated by ATP to form Pro-AMP and then transferred to the acceptor end of tRNA(Pro). The protein is Proline--tRNA ligase of Rubrobacter xylanophilus (strain DSM 9941 / JCM 11954 / NBRC 16129 / PRD-1).